Reading from the N-terminus, the 555-residue chain is Dihydroxy-acid dehydratase (555 aa).

Mg(2+) is bound at residue D78. C119 contacts [2Fe-2S] cluster. Residues D120 and K121 each coordinate Mg(2+). K121 carries the N6-carboxylysine modification. C191 is a [2Fe-2S] cluster binding site. Mg(2+) is bound at residue E444. The active-site Proton acceptor is the S470.

Belongs to the IlvD/Edd family. Homodimer. Requires [2Fe-2S] cluster as cofactor. It depends on Mg(2+) as a cofactor.

It catalyses the reaction (2R)-2,3-dihydroxy-3-methylbutanoate = 3-methyl-2-oxobutanoate + H2O. It carries out the reaction (2R,3R)-2,3-dihydroxy-3-methylpentanoate = (S)-3-methyl-2-oxopentanoate + H2O. It participates in amino-acid biosynthesis; L-isoleucine biosynthesis; L-isoleucine from 2-oxobutanoate: step 3/4. Its pathway is amino-acid biosynthesis; L-valine biosynthesis; L-valine from pyruvate: step 3/4. Its function is as follows. Functions in the biosynthesis of branched-chain amino acids. Catalyzes the dehydration of (2R,3R)-2,3-dihydroxy-3-methylpentanoate (2,3-dihydroxy-3-methylvalerate) into 2-oxo-3-methylpentanoate (2-oxo-3-methylvalerate) and of (2R)-2,3-dihydroxy-3-methylbutanoate (2,3-dihydroxyisovalerate) into 2-oxo-3-methylbutanoate (2-oxoisovalerate), the penultimate precursor to L-isoleucine and L-valine, respectively. This is Dihydroxy-acid dehydratase from Nitratidesulfovibrio vulgaris (strain DSM 19637 / Miyazaki F) (Desulfovibrio vulgaris).